The sequence spans 399 residues: Putative 8-amino-7-oxononanoate synthase (399 aa).

Arginine 24 is a substrate binding site. 111–112 (GW) provides a ligand contact to pyridoxal 5'-phosphate. Residue histidine 141 participates in substrate binding. Pyridoxal 5'-phosphate contacts are provided by residues serine 189, 214–217 (DEAH), and 243–246 (TFSK). N6-(pyridoxal phosphate)lysine is present on lysine 246. Substrate is bound at residue threonine 360.

The protein belongs to the class-II pyridoxal-phosphate-dependent aminotransferase family. BioF subfamily. As to quaternary structure, homodimer. Pyridoxal 5'-phosphate serves as cofactor.

The catalysed reaction is 6-carboxyhexanoyl-[ACP] + L-alanine + H(+) = (8S)-8-amino-7-oxononanoate + holo-[ACP] + CO2. It participates in cofactor biosynthesis; biotin biosynthesis. Catalyzes the decarboxylative condensation of pimeloyl-[acyl-carrier protein] and L-alanine to produce 8-amino-7-oxononanoate (AON), [acyl-carrier protein], and carbon dioxide. In Bordetella bronchiseptica (strain ATCC BAA-588 / NCTC 13252 / RB50) (Alcaligenes bronchisepticus), this protein is Putative 8-amino-7-oxononanoate synthase (bioF).